Consider the following 89-residue polypeptide: Pyrin domain-containing protein 1 (89 aa).

Residues 1 to 89 (MGTKREAILK…EEAARLQRAA (89 aa)) form the Pyrin domain.

In terms of assembly, interacts with PYCARD/ASC (via pyrin domain). Post-translationally, phosphorylated. Predominantly expressed in monocytes, macrophages and granulocytes.

It is found in the cytoplasm. Its function is as follows. Associates with PYCARD/ASC and modulates its ability to collaborate with MEFV/pyrin and NLRP3/cryopyrin in NF-kappa-B and pro-caspase-1 activation. Suppresses kinase activity of NF-kappa-B inhibitor kinase (IKK) complex, expression of NF-kappa-B inducible genes and inhibits NF-kappa-B activation by cytokines and LPS. In Homo sapiens (Human), this protein is Pyrin domain-containing protein 1.